We begin with the raw amino-acid sequence, 413 residues long: Arginine biosynthesis bifunctional protein ArgJ (413 aa).

The substrate site is built by Thr158, Lys184, Thr195, Glu285, Asn408, and Ser413. Thr195 functions as the Nucleophile in the catalytic mechanism.

This sequence belongs to the ArgJ family. Heterotetramer of two alpha and two beta chains.

It localises to the cytoplasm. The enzyme catalyses N(2)-acetyl-L-ornithine + L-glutamate = N-acetyl-L-glutamate + L-ornithine. It catalyses the reaction L-glutamate + acetyl-CoA = N-acetyl-L-glutamate + CoA + H(+). The protein operates within amino-acid biosynthesis; L-arginine biosynthesis; L-ornithine and N-acetyl-L-glutamate from L-glutamate and N(2)-acetyl-L-ornithine (cyclic): step 1/1. It functions in the pathway amino-acid biosynthesis; L-arginine biosynthesis; N(2)-acetyl-L-ornithine from L-glutamate: step 1/4. Functionally, catalyzes two activities which are involved in the cyclic version of arginine biosynthesis: the synthesis of N-acetylglutamate from glutamate and acetyl-CoA as the acetyl donor, and of ornithine by transacetylation between N(2)-acetylornithine and glutamate. In Bradyrhizobium diazoefficiens (strain JCM 10833 / BCRC 13528 / IAM 13628 / NBRC 14792 / USDA 110), this protein is Arginine biosynthesis bifunctional protein ArgJ.